The chain runs to 237 residues: UPF0173 metal-dependent hydrolase BCAN_B0597 (237 aa).

The protein belongs to the UPF0173 family.

This is UPF0173 metal-dependent hydrolase BCAN_B0597 from Brucella canis (strain ATCC 23365 / NCTC 10854 / RM-666).